We begin with the raw amino-acid sequence, 628 residues long: Protein SDS23 (628 aa).

Positions methionine 1–proline 126 are disordered. A compositionally biased stretch (polar residues) spans arginine 15–proline 24. 2 stretches are compositionally biased toward low complexity: residues glutamine 40 to threonine 71 and serine 109 to serine 123. CBS domains are found at residues leucine 258 to serine 319 and glycine 334 to leucine 392. Residues glycine 551–serine 609 form a disordered region. Over residues serine 587–asparagine 599 the composition is skewed to low complexity.

Belongs to the SDS23 family.

It is found in the cytoplasm. Its subcellular location is the nucleus. Involved in DNA replication and cell separation. This is Protein SDS23 (SDS24) from Candida albicans (strain SC5314 / ATCC MYA-2876) (Yeast).